We begin with the raw amino-acid sequence, 78 residues long: Acyl carrier protein (78 aa).

A Carrier domain is found at 2-77 (SDIEQRVKQA…SAIDYVTKKL (76 aa)). At S37 the chain carries O-(pantetheine 4'-phosphoryl)serine.

The protein belongs to the acyl carrier protein (ACP) family. In terms of processing, 4'-phosphopantetheine is transferred from CoA to a specific serine of apo-ACP by AcpS. This modification is essential for activity because fatty acids are bound in thioester linkage to the sulfhydryl of the prosthetic group.

The protein localises to the cytoplasm. Its pathway is lipid metabolism; fatty acid biosynthesis. Carrier of the growing fatty acid chain in fatty acid biosynthesis. In Acinetobacter baylyi (strain ATCC 33305 / BD413 / ADP1), this protein is Acyl carrier protein.